We begin with the raw amino-acid sequence, 191 residues long: Holliday junction branch migration complex subunit RuvA (191 aa).

The segment at methionine 1–threonine 64 is domain I. A domain II region spans residues aspartate 65 to serine 145. The segment at valine 146–serine 149 is flexible linker. Residues serine 149–lysine 191 are domain III.

The protein belongs to the RuvA family. As to quaternary structure, homotetramer. Forms an RuvA(8)-RuvB(12)-Holliday junction (HJ) complex. HJ DNA is sandwiched between 2 RuvA tetramers; dsDNA enters through RuvA and exits via RuvB. An RuvB hexamer assembles on each DNA strand where it exits the tetramer. Each RuvB hexamer is contacted by two RuvA subunits (via domain III) on 2 adjacent RuvB subunits; this complex drives branch migration. In the full resolvosome a probable DNA-RuvA(4)-RuvB(12)-RuvC(2) complex forms which resolves the HJ.

The protein localises to the cytoplasm. Functionally, the RuvA-RuvB-RuvC complex processes Holliday junction (HJ) DNA during genetic recombination and DNA repair, while the RuvA-RuvB complex plays an important role in the rescue of blocked DNA replication forks via replication fork reversal (RFR). RuvA specifically binds to HJ cruciform DNA, conferring on it an open structure. The RuvB hexamer acts as an ATP-dependent pump, pulling dsDNA into and through the RuvAB complex. HJ branch migration allows RuvC to scan DNA until it finds its consensus sequence, where it cleaves and resolves the cruciform DNA. This Anaplasma phagocytophilum (strain HZ) protein is Holliday junction branch migration complex subunit RuvA.